The chain runs to 154 residues: Ascorbate-specific PTS system EIIA component (154 aa).

One can recognise a PTS EIIA type-2 domain in the interval serine 6–threonine 150. Histidine 68 serves as the catalytic Tele-phosphohistidine intermediate. The residue at position 68 (histidine 68) is a Phosphohistidine.

Its subcellular location is the cytoplasm. Functionally, the phosphoenolpyruvate-dependent sugar phosphotransferase system (sugar PTS), a major carbohydrate active transport system, catalyzes the phosphorylation of incoming sugar substrates concomitantly with their translocation across the cell membrane. The enzyme II UlaABC PTS system is involved in ascorbate transport. In Salmonella typhi, this protein is Ascorbate-specific PTS system EIIA component (ulaC).